A 198-amino-acid chain; its full sequence is Cell division protein SepF (198 aa).

The segment at 170 to 198 (EVPQPPARPARPASTNPPAWGNETNRMAQ) is disordered. Positions 179 to 188 (ARPASTNPPA) are enriched in low complexity.

Belongs to the SepF family. In terms of assembly, homodimer. Interacts with FtsZ.

The protein resides in the cytoplasm. Cell division protein that is part of the divisome complex and is recruited early to the Z-ring. Probably stimulates Z-ring formation, perhaps through the cross-linking of FtsZ protofilaments. Its function overlaps with FtsA. The sequence is that of Cell division protein SepF from Nostoc sp. (strain PCC 7120 / SAG 25.82 / UTEX 2576).